The primary structure comprises 194 residues: MEDGLLEIMTKDGGDMPAPLEVSTVPAVGDVISGEYNGGMKELMEHLKAQLQALFEDVRAMRGALDEQASHIQVLSDDVCANQRAIVSMCQIMTTAPRQGGLGVVGGKGSFQSDPQEPETPSPGIGDSGLLGRDPEDEEEEEEEKEMPSPATPSSHCERPESPCAGLLGGDGPLVEPLDMPDITLLQLEGEASL.

Positions 39–68 (GMKELMEHLKAQLQALFEDVRAMRGALDEQ) form a coiled coil. The tract at residues 101 to 176 (GLGVVGGKGS…LLGGDGPLVE (76 aa)) is disordered. A compositionally biased stretch (acidic residues) spans 135-145 (PEDEEEEEEEK).

The polypeptide is Coiled-coil domain-containing protein 184 (CCDC184) (Homo sapiens (Human)).